The primary structure comprises 543 residues: Ribonuclease Y (543 aa).

Residues 4–24 (IIMIPVATAIVSLLVGTVTGY) traverse the membrane as a helical segment. One can recognise a KH domain in the interval 233–296 (TVSVVDLPNE…EIAKRAMERL (64 aa)). One can recognise an HD domain in the interval 359–452 (VLSHSIEVGK…VVAADTISSA (94 aa)).

This sequence belongs to the RNase Y family.

Its subcellular location is the cell membrane. In terms of biological role, endoribonuclease that initiates mRNA decay. This chain is Ribonuclease Y, found in Lactobacillus acidophilus (strain ATCC 700396 / NCK56 / N2 / NCFM).